The primary structure comprises 262 residues: Nickel import ATP-binding protein NikD (262 aa).

Residues 6–249 enclose the ABC transporter domain; it reads LAIEGLTATT…PGHEVTRMLV (244 aa). 42 to 49 contributes to the ATP binding site; it reads GASGSGKS.

It belongs to the ABC transporter superfamily. Nickel importer (TC 3.A.1.5.3) family. As to quaternary structure, the complex is composed of two ATP-binding proteins (NikD and NikE), two transmembrane proteins (NikB and NikC) and a solute-binding protein (NikA).

It localises to the cell inner membrane. It carries out the reaction Ni(2+)(out) + ATP + H2O = Ni(2+)(in) + ADP + phosphate + H(+). Functionally, part of the ABC transporter complex NikABCDE involved in nickel import. Responsible for energy coupling to the transport system. The protein is Nickel import ATP-binding protein NikD of Brucella suis biovar 1 (strain 1330).